Here is a 263-residue protein sequence, read N- to C-terminus: uncharacterized protein (263 aa).

The DOD-type homing endonuclease domain maps to 107 to 246 (ILGVLNGDGS…CCSFLEKLGI (140 aa)).

This is an uncharacterized protein from Methanocaldococcus jannaschii (strain ATCC 43067 / DSM 2661 / JAL-1 / JCM 10045 / NBRC 100440) (Methanococcus jannaschii).